A 324-amino-acid chain; its full sequence is Annexin A10 (324 aa).

Annexin repeat units lie at residues 17-88 (FNPM…GLMY), 89-160 (PPPS…NLVQ), 171-243 (AMAA…AIVR), and 247-318 (DKPS…AICA).

Belongs to the annexin family.

The sequence is that of Annexin A10 (Anxa10) from Mus musculus (Mouse).